We begin with the raw amino-acid sequence, 140 residues long: MAEKAAEKAEQRAADEAEKRPVEDGEKHSGRKRRRRNYDEHDEAVAKDDAQSAKAGAAADSDADDSDADDEKLEVLMAREEEDEDDLAEIDASNIISGGRRTRGKVIDYKQTAEELAAEGAAAGVDDDAEDADADFDGEG.

Basic and acidic residues-rich tracts occupy residues 1 to 28 and 37 to 51; these read MAEK…GEKH and NYDE…DDAQ. Disordered stretches follow at residues 1-73 and 118-140; these read MAEK…DEKL and AEGA…DGEG. 2 stretches are compositionally biased toward acidic residues: residues 61 to 72 and 125 to 140; these read SDADDSDADDEK and VDDD…DGEG.

The protein belongs to the CHZ1 family. Forms a heterotrimer with H2A.Z-H2B, stabilizing the association of the histone dimer. Also, with a lower affinity, forms a heterotrimer with H2A-H2B.

It localises to the nucleus. Its function is as follows. Forms a chaperone-bound H2A.Z-H2B complex that acts as a source for SWR1 complex-dependent H2A to H2A.Z histone replacement in chromatin. This chain is Histone H2A.Z-specific chaperone CHZ1 (CHZ1), found in Eremothecium gossypii (strain ATCC 10895 / CBS 109.51 / FGSC 9923 / NRRL Y-1056) (Yeast).